Reading from the N-terminus, the 412-residue chain is Putative competence-damage inducible protein (412 aa).

The protein belongs to the CinA family.

The polypeptide is Putative competence-damage inducible protein (Bacillus cereus (strain G9842)).